A 403-amino-acid chain; its full sequence is Protein Bel-2 (403 aa).

The protein belongs to the spumavirus protein Bel-2 family.

This Homo sapiens (Human) protein is Protein Bel-2 (bel2).